We begin with the raw amino-acid sequence, 305 residues long: Mitochondrial uncoupling protein 2 (305 aa).

Solcar repeat units lie at residues 10 to 104, 114 to 205, and 214 to 297; these read ISFL…VKTL, IPLY…IKET, and DSVL…VKKV. Transmembrane regions (helical) follow at residues 16–36, 73–93, 120–140, 179–199, 220–240, and 270–290; these read FICSAFAACFAELCTIPLDTA, ISGLWKGVIAGLHRQCIYGGL, ILAALLTGAIAIIVANPTDLV, TGLGPNIARNAIVNAAELASY, LLAGLAAGFFAVCIGSPIDVV, and YKGFLPNFTRLGTWNAIMFLT.

This sequence belongs to the mitochondrial carrier (TC 2.A.29) family.

The protein localises to the mitochondrion inner membrane. PUMPS are mitochondrial transporter proteins that create proton leaks across the inner mitochondrial membrane, thus uncoupling oxidative phosphorylation. This leads to a decrease in the efficiency of oxidative phosphorylation and an increase in heat production. May be involved in protecting plant cells against oxidative stress damage. This Arabidopsis thaliana (Mouse-ear cress) protein is Mitochondrial uncoupling protein 2 (PUMP2).